The following is a 246-amino-acid chain: Probable 2-phosphosulfolactate phosphatase (246 aa).

The protein belongs to the ComB family. Mg(2+) serves as cofactor.

The catalysed reaction is (2R)-O-phospho-3-sulfolactate + H2O = (2R)-3-sulfolactate + phosphate. The chain is Probable 2-phosphosulfolactate phosphatase from Synechococcus sp. (strain WH7803).